The sequence spans 149 residues: Pleckstrin homology domain-containing family J member 1 (149 aa).

Residues 15–108 (PAEMAAELGM…WMEALRRASY (94 aa)) form the PH domain.

In terms of tissue distribution, expressed in testis and liver.

This chain is Pleckstrin homology domain-containing family J member 1 (PLEKHJ1), found in Homo sapiens (Human).